The primary structure comprises 170 residues: UPF0316 protein CLK_3798 (170 aa).

2 consecutive transmembrane segments (helical) span residues 1-21 (MLSY…LMTI) and 36-56 (IIGF…LSGI).

This sequence belongs to the UPF0316 family.

The protein localises to the cell membrane. The polypeptide is UPF0316 protein CLK_3798 (Clostridium botulinum (strain Loch Maree / Type A3)).